The chain runs to 242 residues: Putative pyrimidine-specific ribonucleoside hydrolase RihB (242 aa).

Glutamine 156 and histidine 168 together coordinate substrate.

The protein belongs to the IUNH family. RihB subfamily.

It carries out the reaction a pyrimidine ribonucleoside + H2O = a pyrimidine nucleobase + D-ribose. The chain is Putative pyrimidine-specific ribonucleoside hydrolase RihB (rihB) from Shigella boydii serotype 4 (strain Sb227).